The chain runs to 227 residues: Endo-1,4-beta-xylanase 11A (227 aa).

The first 36 residues, 1 to 36, serve as a signal peptide directing secretion; sequence MVSASSLLLAASAIAGVFSAPAAAPVSENLNVLQER. The GH11 domain occupies 37–227; the sequence is ALTSSATGTS…SSGSASITVS (191 aa). Positions 112 to 136 are necrosis inducing domain; that stretch reads VYGWTTSPLIEYYIVEDFGTYDPSS. Glutamate 122 serves as the catalytic Nucleophile. Catalysis depends on glutamate 214, which acts as the Proton donor.

It belongs to the glycosyl hydrolase 11 (cellulase G) family.

Its subcellular location is the secreted. The catalysed reaction is Endohydrolysis of (1-&gt;4)-beta-D-xylosidic linkages in xylans.. It functions in the pathway glycan degradation; xylan degradation. Its activity is regulated as follows. Significantly inhibited by the wheat xylanase inhibiting protein I (XIP-I) and the proteinaceous endoxylanase Triticum aestivum xylanase inhibitors I (TAXI-I), whereas no inhibition is detected with TAXI-II. Functionally, endo-1,4-beta-xylanase involved in the hydrolysis of xylan, a major structural heterogeneous polysaccharide found in plant biomass representing the second most abundant polysaccharide in the biosphere, after cellulose. Required for plant infection and the appearance of secondary lesions. Is able to induce necrosis on leaves, seedling growth inhibition, induction of a ROS burst, electrolyte leakage, cytoplasm shrinkage, autofluorescence, cell death, and induction of defense genes, and this abilities are independent of the catalytic activity. Only exhibits elicitor activity in certain plants such as tomato, but not in N.benthamiana. The chain is Endo-1,4-beta-xylanase 11A from Botryotinia fuckeliana (strain B05.10) (Noble rot fungus).